We begin with the raw amino-acid sequence, 2227 residues long: Genome polyprotein (2227 aa).

2 short sequence motifs ((L)YPX(n)L motif) span residues 167 to 171 (YPHGL) and 200 to 205 (YPVWEL). The tract at residues 766–836 (MMSRIAAGDL…PRKMKGLFSQ (71 aa)) is involved in P1-2A pentamerization. Residues 1011–1031 (TVEIINTVLCFVKSGILLYVI) form a helical membrane-spanning segment. A membrane-penetrating ability region spans residues 1043–1070 (IGLLRVMNYADIGCSVISCGKVFSKMLE). The stretch at 1127–1152 (KKKDILNILKDNQQKIEKAIEEADNF) forms a coiled coil. Positions 1204–1366 (HQKLKNLGSI…SFFKNPHNDM (163 aa)) constitute an SF3 helicase domain. 1230-1237 (GKRGGGKS) provides a ligand contact to ATP. Residues 1462 to 1482 (WVAVGAAVGILGVLVGGWFVY) traverse the membrane as a helical segment. Tyr-1499 is modified (O-(5'-phospho-RNA)-tyrosine). The Peptidase C3 domain occupies 1514–1728 (DPVESQSTLE…VAKLVTQEMF (215 aa)). Catalysis depends on for protease 3C activity residues His-1563, Asp-1603, and Cys-1691. The 122-residue stretch at 1976–2097 (DVGLDLDFSA…VFSRDVQIDN (122 aa)) folds into the RdRp catalytic domain.

This sequence belongs to the picornaviridae polyprotein family. Homodimer. Homomultimer; probably interacts with membranes in a multimeric form. Seems to assemble into amyloid-like fibers. In terms of assembly, homodimer. Monomer. Interacts with protein 3CD. As to quaternary structure, interacts with host ACBD3. Interacts with protein 3AB. In terms of assembly, interacts with human MAVS. As to quaternary structure, homodimer; disulfide-linked. Homopentamer. Homooligomer. In terms of assembly, interacts with capsid protein VP2. Interacts with capsid protein VP3. As to quaternary structure, interacts with capsid protein VP1. Interacts with capsid protein VP3. Interacts with capsid protein VP1. Interacts with capsid protein VP2. In terms of processing, specific enzymatic cleavages by viral protease in vivo yield a variety of precursors and mature proteins. Polyprotein processing intermediates are produced, such as P1-2A which is a functional precursor of the structural proteins, VP0 which is a VP4-VP2 precursor, VP1-2A precursor, 3ABC precursor which is a stable and catalytically active precursor of 3A, 3B and 3C proteins, 3AB and 3CD precursors. The assembly signal 2A is removed from VP1-2A by a host protease, possibly host Cathepsin L. This cleavage occurs over a region of 3 amino-acids probably generating VP1 proteins with heterogeneous C-termini. Post-translationally, during virion maturation, immature virions are rendered infectious following cleavage of VP0 into VP4 and VP2. This maturation seems to be an autocatalytic event triggered by the presence of RNA in the capsid and is followed by a conformational change of the particle. The assembly signal 2A is removed from VP1-2A by a host protease, possibly host Cathepsin L in naked virions. This cleavage does not occur in enveloped virions. This cleavage occurs over a region of 3 amino-acids probably generating VP1 proteins with heterogeneous C-termini. In terms of processing, VPg is uridylylated prior to priming replication into VPg-pUpU. Post-translationally, unlike other picornaviruses, does not seem to be myristoylated.

It is found in the virion. The protein resides in the host endosome. It localises to the host multivesicular body. Its subcellular location is the host membrane. The protein localises to the host mitochondrion outer membrane. It is found in the host cytoplasm. The protein resides in the host cytoplasmic vesicle membrane. It carries out the reaction RNA(n) + a ribonucleoside 5'-triphosphate = RNA(n+1) + diphosphate. The enzyme catalyses a ribonucleoside 5'-triphosphate + H2O = a ribonucleoside 5'-diphosphate + phosphate + H(+). It catalyses the reaction Selective cleavage of Gln-|-Gly bond in the poliovirus polyprotein. In other picornavirus reactions Glu may be substituted for Gln, and Ser or Thr for Gly.. Its function is as follows. Capsid proteins VP1, VP2, and VP3 form a closed capsid enclosing the viral positive strand RNA genome. All these proteins contain a beta-sheet structure called beta-barrel jelly roll. Together they form an icosahedral capsid (T=3) composed of 60 copies of each VP1, VP2, and VP3, with a diameter of approximately 300 Angstroms. VP1 is situated at the 12 fivefold axes, whereas VP2 and VP3 are located at the quasi-sixfold axes. The naked capsid interacts with the host receptor HAVCR1 to provide virion attachment to and probably entry into the target cell. Functionally, VP0 precursor is a component of the immature procapsids. In terms of biological role, plays a role in the assembly of the 12 pentamers into an icosahedral structure. Has not been detected in mature virions, supposedly owing to its small size. Precursor component of immature procapsids that corresponds to an extended form of the structural protein VP1. After maturation, possibly by the host Cathepsin L, the assembly signal 2A is cleaved to give rise to the mature VP1 protein. Its function is as follows. Functions as a viroporin. Affects membrane integrity and causes an increase in membrane permeability. Involved in host intracellular membrane rearrangements probably to give rise to the viral factories. Does not disrupt calcium homeostasis or glycoprotein trafficking. Antagonizes the innate immune response of the host by suppressing IFN-beta synthesis, which it achieves by interfering with the RIG-I/IFIH1 pathway. Functionally, affects membrane integrity and causes an increase in membrane permeability. In terms of biological role, associates with and induces structural rearrangements of intracellular membranes. Displays RNA-binding activity. The precursor 3ABC is targeted to the mitochondrial membrane where protease 3C activity cleaves and inhibits the host antiviral protein MAVS, thereby disrupting activation of IRF3 through the IFIH1/MDA5 pathway. In vivo, the protease activity of 3ABC precursor is more efficient in cleaving the 2BC precursor than that of protein 3C. The 3ABC precursor may therefore play a role in the proteolytic processing of the polyprotein. Possible viroporin. Its function is as follows. Interacts with the 3CD precursor and with RNA structures found at both the 5'- and 3'-termini of the viral genome. Since the 3AB precursor contains the hydrophobic domain 3A, it probably anchors the whole viral replicase complex to intracellular membranes on which viral RNA synthesis occurs. Functionally, may serve as membrane anchor to the 3AB and 3ABC precursors via its hydrophobic domain. May interact with RNA. In terms of biological role, acts as a primer for viral RNA replication and remains covalently bound to viral genomic RNA. VPg is uridylylated prior to priming replication into VPg-pUpU. The VPg-pUpU is then used as primer on the genomic RNA poly(A) by the RNA-dependent RNA polymerase to replicate the viral genome. Cysteine protease that generates mature viral proteins from the precursor polyprotein. In addition to its proteolytic activity, it binds to viral RNA, and thus influences viral genome replication. RNA and substrate bind cooperatively to the protease. Cleaves IKBKG/NEMO to impair innate immune signaling. Cleaves host PABPC1 which may participate in the switch of viral translation to RNA synthesis. Its function is as follows. Interacts with the 3AB precursor and with RNA structures found at both the 5'- and 3'-termini of the viral genome. Disrupts TLR3 signaling by degrading the host adapter protein TICAM1/TRIF. Functionally, RNA-directed RNA polymerase 3D-POL replicates genomic and antigenomic RNA by recognizing replications specific signals. This Cercopithecus hamlyni (Owl-faced monkey) protein is Genome polyprotein.